A 363-amino-acid polypeptide reads, in one-letter code: Ribosomal RNA large subunit methyltransferase M (363 aa).

S-adenosyl-L-methionine is bound by residues S190, 223 to 226, D242, D262, and D279; that span reads CPGG. K308 (proton acceptor) is an active-site residue.

This sequence belongs to the class I-like SAM-binding methyltransferase superfamily. RNA methyltransferase RlmE family. RlmM subfamily. Monomer.

Its subcellular location is the cytoplasm. It carries out the reaction cytidine(2498) in 23S rRNA + S-adenosyl-L-methionine = 2'-O-methylcytidine(2498) in 23S rRNA + S-adenosyl-L-homocysteine + H(+). Its function is as follows. Catalyzes the 2'-O-methylation at nucleotide C2498 in 23S rRNA. The protein is Ribosomal RNA large subunit methyltransferase M of Vibrio atlanticus (strain LGP32) (Vibrio splendidus (strain Mel32)).